We begin with the raw amino-acid sequence, 227 residues long: Phosphatidylserine decarboxylase proenzyme (227 aa).

S184 serves as the catalytic Schiff-base intermediate with substrate; via pyruvic acid. S184 bears the Pyruvic acid (Ser); by autocatalysis mark.

It belongs to the phosphatidylserine decarboxylase family. PSD-A subfamily. Heterodimer of a large membrane-associated beta subunit and a small pyruvoyl-containing alpha subunit. Pyruvate is required as a cofactor. In terms of processing, is synthesized initially as an inactive proenzyme. Formation of the active enzyme involves a self-maturation process in which the active site pyruvoyl group is generated from an internal serine residue via an autocatalytic post-translational modification. Two non-identical subunits are generated from the proenzyme in this reaction, and the pyruvate is formed at the N-terminus of the alpha chain, which is derived from the carboxyl end of the proenzyme. The post-translation cleavage follows an unusual pathway, termed non-hydrolytic serinolysis, in which the side chain hydroxyl group of the serine supplies its oxygen atom to form the C-terminus of the beta chain, while the remainder of the serine residue undergoes an oxidative deamination to produce ammonia and the pyruvoyl prosthetic group on the alpha chain.

The protein localises to the cell membrane. It carries out the reaction a 1,2-diacyl-sn-glycero-3-phospho-L-serine + H(+) = a 1,2-diacyl-sn-glycero-3-phosphoethanolamine + CO2. It participates in phospholipid metabolism; phosphatidylethanolamine biosynthesis; phosphatidylethanolamine from CDP-diacylglycerol: step 2/2. In terms of biological role, catalyzes the formation of phosphatidylethanolamine (PtdEtn) from phosphatidylserine (PtdSer). The chain is Phosphatidylserine decarboxylase proenzyme from Ehrlichia ruminantium (strain Gardel).